Consider the following 333-residue polypeptide: MGRKRGRDIDGWLILDKPLGPTSTDMVNKLRWAFDAKKAGHGGTLDPLASGVLPIAFGKATRTIPYIMDATKRYRFTLTFGESRTTDDLEGEVLATSPNRPTDDQIRAVLPALTGNVMQVPPVFSALRVGGERAYDMARAGRPPELPPRPARIDSITLVERPDANTAVFDVQSGKGVYMRSLARDIALACGTVGHISVLRRTKCGPFDLSHALTIDQISLDKSTQTVDNADALPAPLLDAATALVDIPALAVTDAEGRMLVWGQSIDPADLVHPLPASSQGEDHLWRAMIGEHVLGLCHVRHGRLRAARMLENHEFFGEHDVDYRRTPHGTDF.

Residue aspartate 46 is the Nucleophile of the active site.

Belongs to the pseudouridine synthase TruB family. Type 1 subfamily.

It carries out the reaction uridine(55) in tRNA = pseudouridine(55) in tRNA. Responsible for synthesis of pseudouridine from uracil-55 in the psi GC loop of transfer RNAs. This chain is tRNA pseudouridine synthase B, found in Gluconobacter oxydans (strain 621H) (Gluconobacter suboxydans).